The sequence spans 322 residues: Sideroflexin-1 (322 aa).

An N-acetylserine modification is found at S2. Residues 2–102 (SGELPPNINI…MSAQVPMNMT (101 aa)) are Mitochondrial matrix-facing. A helical transmembrane segment spans residues 103–120 (ITGCMMTFYRTTPAVLFW). At 121–146 (QWINQSFNAVVNYTNRSGDAPLTVNE) the chain is on the mitochondrial intermembrane side. Residues 147–167 (LGTAYVSATTGAVATALGLNA) traverse the membrane as a helical segment. The Mitochondrial matrix portion of the chain corresponds to 168-174 (LTKHVSP). A helical transmembrane segment spans residues 175–195 (LIGRFVPFAAVAAANCINIPL). The Mitochondrial intermembrane portion of the chain corresponds to 196–228 (MRQRELRAGIPVTDENGNRLGESANAAKQAITQ). A helical membrane pass occupies residues 229 to 249 (VVISRILMAAPGMAIPPFIMN). The Mitochondrial matrix portion of the chain corresponds to 250–266 (TLEKKAFLKRFPWMSAP). Residues 267-287 (IQVGLVGFCLVFATPLCCALF) form a helical membrane-spanning segment. At 288–322 (PQKSSMSVTSLEAELQAKIRETSPELRRVYFNKGL) the chain is on the mitochondrial intermembrane side.

This sequence belongs to the sideroflexin family.

The protein localises to the mitochondrion inner membrane. The enzyme catalyses L-serine(in) = L-serine(out). It carries out the reaction L-alanine(in) = L-alanine(out). It catalyses the reaction L-cysteine(in) = L-cysteine(out). Its function is as follows. Amino acid transporter importing serine, an essential substrate of the mitochondrial branch of the one-carbon pathway, into mitochondria. Mitochondrial serine is then converted to glycine and formate, which exits to the cytosol where it is used to generate the charged folates that serve as one-carbon donors. May also transport other amino acids including alanine and cysteine. The protein is Sideroflexin-1 (SFXN1) of Sus scrofa (Pig).